The following is a 201-amino-acid chain: Mediator of RNA polymerase II transcription subunit 22 (201 aa).

Positions 93–123 (SVNESINQRNQQLRTLREECDKKLIALRDDI) form a coiled coil. The disordered stretch occupies residues 182 to 201 (SQIHTPPHLNGHGAGMTEHT).

It belongs to the Mediator complex subunit 22 family. In terms of assembly, component of the Mediator complex.

Its subcellular location is the nucleus. Functionally, component of the Mediator complex, a coactivator involved in the regulated transcription of nearly all RNA polymerase II-dependent genes. Mediator functions as a bridge to convey information from gene-specific regulatory proteins to the basal RNA polymerase II transcription machinery. Mediator is recruited to promoters by direct interactions with regulatory proteins and serves as a scaffold for the assembly of a functional preinitiation complex with RNA polymerase II and the general transcription factors. This is Mediator of RNA polymerase II transcription subunit 22 (med22) from Xenopus laevis (African clawed frog).